The primary structure comprises 163 residues: NADH-quinone oxidoreductase subunit I (163 aa).

2 consecutive 4Fe-4S ferredoxin-type domains span residues 55 to 84 and 94 to 123; these read RRYP…IEAE and TRYD…EGPN. The [4Fe-4S] cluster site is built by C64, C67, C70, C74, C103, C106, C109, and C113.

Belongs to the complex I 23 kDa subunit family. In terms of assembly, NDH-1 is composed of 14 different subunits. Subunits NuoA, H, J, K, L, M, N constitute the membrane sector of the complex. The cofactor is [4Fe-4S] cluster.

The protein resides in the cell inner membrane. The enzyme catalyses a quinone + NADH + 5 H(+)(in) = a quinol + NAD(+) + 4 H(+)(out). Functionally, NDH-1 shuttles electrons from NADH, via FMN and iron-sulfur (Fe-S) centers, to quinones in the respiratory chain. The immediate electron acceptor for the enzyme in this species is believed to be ubiquinone. Couples the redox reaction to proton translocation (for every two electrons transferred, four hydrogen ions are translocated across the cytoplasmic membrane), and thus conserves the redox energy in a proton gradient. In Caulobacter vibrioides (strain ATCC 19089 / CIP 103742 / CB 15) (Caulobacter crescentus), this protein is NADH-quinone oxidoreductase subunit I.